Consider the following 201-residue polypeptide: Thiamine transporter ThiT (201 aa).

The next 6 helical transmembrane spans lie at 7 to 27 (LVVILETAIIAAFAMALTYIP), 29 to 49 (TTGVSAIELNYGLIPIAVLAM), 53 to 73 (LVPAAWAGFVWGILDLILRGI), 85 to 105 (ILEYPIAFTLVGLMGLTFASF), 124 to 144 (GIIIGTFAKYFIHFIAGVVFW), and 170 to 190 (TVLTIVVVGVLLTVAPQLFVA).

It belongs to the vitamin uptake transporter (VUT/ECF) (TC 2.A.88) family. Thiamine transporter subfamily. In Lactococcus lactis subsp. cremoris (strain NZ9000) forms a stable energy-coupling factor (ECF) transporter complex probably composed of a membrane-embedded substrate-binding protein (S component), two ATP-binding proteins (A components) and a transmembrane protein (T component).

It localises to the cell membrane. In terms of biological role, thiamine-binding protein that interacts with the energy-coupling factor (ECF) ABC-transporter complex. Unlike classic ABC transporters this ECF transporter provides the energy necessary to transport a number of different substrates. The substrates themselves are bound by transmembrane, not extracytoplasmic soluble proteins and transport it into cells. Binds thiamine with a dissociation constant of 0.5 nM. Upon coexpression with its energy-coupling factor (ECF) ABC-transporter complex EcfA1A2T in Lactococcus lactis subsp. cremoris (strain NZ9000) allows thiamine uptake; uptake requires both ThiT and EcfA1A2T. The chain is Thiamine transporter ThiT (thiT) from Lacticaseibacillus paracasei (strain ATCC 334 / BCRC 17002 / CCUG 31169 / CIP 107868 / KCTC 3260 / NRRL B-441) (Lactobacillus paracasei).